The sequence spans 393 residues: Na(+)/H(+) antiporter NhaA (393 aa).

11 helical membrane passes run 24 to 44 (GGLV…SPLA), 58 to 78 (LSLL…LVGL), 96 to 116 (ILPG…YILF), 126 to 146 (GWAI…SLFG), 155 to 175 (IFLA…IALF), 178 to 198 (SDLN…LYGM), 214 to 234 (AVLW…GVLL), 267 to 287 (VAFI…FSGV), 300 to 320 (VAAG…FLLV), 338 to 358 (GVAA…LLAF), and 369 to 389 (MGIL…LATF).

The protein belongs to the NhaA Na(+)/H(+) (TC 2.A.33) antiporter family.

The protein localises to the cell inner membrane. It catalyses the reaction Na(+)(in) + 2 H(+)(out) = Na(+)(out) + 2 H(+)(in). Na(+)/H(+) antiporter that extrudes sodium in exchange for external protons. This Rhizobium etli (strain ATCC 51251 / DSM 11541 / JCM 21823 / NBRC 15573 / CFN 42) protein is Na(+)/H(+) antiporter NhaA.